Here is a 197-residue protein sequence, read N- to C-terminus: HTH-type transcriptional regulator BetI (197 aa).

The HTH tetR-type domain maps to 8–68; sequence PIRRQQLIQA…ATMRHLMNAL (61 aa). Positions 31-50 form a DNA-binding region, H-T-H motif; it reads SIALIARLAGVSNGIISHYF.

Its pathway is amine and polyamine biosynthesis; betaine biosynthesis via choline pathway [regulation]. In terms of biological role, repressor involved in the biosynthesis of the osmoprotectant glycine betaine. It represses transcription of the choline transporter BetT and the genes of BetAB involved in the synthesis of glycine betaine. In Pseudomonas syringae pv. tomato (strain ATCC BAA-871 / DC3000), this protein is HTH-type transcriptional regulator BetI.